Reading from the N-terminus, the 374-residue chain is Wnt inhibitory factor 1 (374 aa).

A signal peptide spans 1-28 (MSLTGYFAAPLCSIFLFILAHADAGQQE). In terms of domain architecture, WIF spans 33–172 (MWIDAHQARV…PQNAIFFKTC (140 aa)). N-linked (GlcNAc...) asparagine glycosylation occurs at Asn83. Disulfide bonds link Cys135-Cys172, Cys177-Cys187, Cys181-Cys193, Cys195-Cys204, Cys209-Cys219, Cys213-Cys225, and Cys227-Cys236. 5 consecutive EGF-like domains span residues 173-205 (QQAK…PHCE), 208-237 (LCMP…INCD), 237-269 (DKVN…EQCE), 270-301 (TSKC…DLCS), and 302-333 (KPVC…RYCN). N-linked (GlcNAc...) asparagine glycosylation occurs at Asn240. Cystine bridges form between Cys241–Cys251, Cys245–Cys257, Cys259–Cys268, Cys273–Cys283, Cys277–Cys289, Cys291–Cys300, Cys305–Cys315, Cys309–Cys321, and Cys323–Cys332. The disordered stretch occupies residues 343–374 (ALRPTGSRNRQHTPSPKRTEDRQALPESNYIW). Positions 348–358 (GSRNRQHTPSP) are enriched in polar residues.

During somatogenesis, expressed predominantly in unsegmented paraxial presomitic mesoderm and, to a much lesser extent, in newly segmented somites.

Its subcellular location is the secreted. Its function is as follows. Binds to WNT proteins and inhibits their activities. May be involved in mesoderm segmentation. In Xenopus laevis (African clawed frog), this protein is Wnt inhibitory factor 1 (wif1).